A 432-amino-acid polypeptide reads, in one-letter code: NADH-quinone oxidoreductase subunit D (432 aa).

This sequence belongs to the complex I 49 kDa subunit family. NDH-1 is composed of 14 different subunits. Subunits NuoB, C, D, E, F, and G constitute the peripheral sector of the complex.

It localises to the cell membrane. It catalyses the reaction a quinone + NADH + 5 H(+)(in) = a quinol + NAD(+) + 4 H(+)(out). Its function is as follows. NDH-1 shuttles electrons from NADH, via FMN and iron-sulfur (Fe-S) centers, to quinones in the respiratory chain. The immediate electron acceptor for the enzyme in this species is believed to be a menaquinone. Couples the redox reaction to proton translocation (for every two electrons transferred, four hydrogen ions are translocated across the cytoplasmic membrane), and thus conserves the redox energy in a proton gradient. This Mycobacteroides abscessus (strain ATCC 19977 / DSM 44196 / CCUG 20993 / CIP 104536 / JCM 13569 / NCTC 13031 / TMC 1543 / L948) (Mycobacterium abscessus) protein is NADH-quinone oxidoreductase subunit D.